We begin with the raw amino-acid sequence, 214 residues long: Glycerol-3-phosphate acyltransferase (214 aa).

5 consecutive transmembrane segments (helical) span residues 4 to 24 (LIVAVVAYLIGSVSFAVIVSA), 52 to 72 (AAILTLIGDAFKGWLPVWFVV), 82 to 102 (ETSVAIASVAVFLGHLYPVFF), 118 to 138 (LAINPILGVATLLTWLIVAFF), and 159 to 179 (FLFGPHVIALAIVVMSSLLVW).

It belongs to the PlsY family. In terms of assembly, probably interacts with PlsX.

It localises to the cell inner membrane. The catalysed reaction is an acyl phosphate + sn-glycerol 3-phosphate = a 1-acyl-sn-glycero-3-phosphate + phosphate. The protein operates within lipid metabolism; phospholipid metabolism. Catalyzes the transfer of an acyl group from acyl-phosphate (acyl-PO(4)) to glycerol-3-phosphate (G3P) to form lysophosphatidic acid (LPA). This enzyme utilizes acyl-phosphate as fatty acyl donor, but not acyl-CoA or acyl-ACP. The sequence is that of Glycerol-3-phosphate acyltransferase from Paraburkholderia phytofirmans (strain DSM 17436 / LMG 22146 / PsJN) (Burkholderia phytofirmans).